The following is a 172-amino-acid chain: Large ribosomal subunit protein eL20A (172 aa).

Serine 32 is subject to Phosphoserine. Residues lysine 125, lysine 131, and lysine 149 each participate in a glycyl lysine isopeptide (Lys-Gly) (interchain with G-Cter in ubiquitin) cross-link.

The protein belongs to the eukaryotic ribosomal protein eL20 family. As to quaternary structure, component of the large ribosomal subunit (LSU). Mature yeast ribosomes consist of a small (40S) and a large (60S) subunit. The 40S small subunit contains 1 molecule of ribosomal RNA (18S rRNA) and 33 different proteins (encoded by 57 genes). The large 60S subunit contains 3 rRNA molecules (25S, 5.8S and 5S rRNA) and 46 different proteins (encoded by 81 genes). eL20 forms multiple interactions with RNA and proteins in the central protuberance, connecting components of core functional centers that are located far apart.

The protein resides in the cytoplasm. Functionally, component of the ribosome, a large ribonucleoprotein complex responsible for the synthesis of proteins in the cell. The small ribosomal subunit (SSU) binds messenger RNAs (mRNAs) and translates the encoded message by selecting cognate aminoacyl-transfer RNA (tRNA) molecules. The large subunit (LSU) contains the ribosomal catalytic site termed the peptidyl transferase center (PTC), which catalyzes the formation of peptide bonds, thereby polymerizing the amino acids delivered by tRNAs into a polypeptide chain. The nascent polypeptides leave the ribosome through a tunnel in the LSU and interact with protein factors that function in enzymatic processing, targeting, and the membrane insertion of nascent chains at the exit of the ribosomal tunnel. This Saccharomyces cerevisiae (strain ATCC 204508 / S288c) (Baker's yeast) protein is Large ribosomal subunit protein eL20A.